The primary structure comprises 201 residues: Recombination protein RecR (201 aa).

The C4-type zinc-finger motif lies at 60 to 75; it reads CQICGNIDTRDPCTIC. Residues 83–178 form the Toprim domain; that stretch reads TLLVVVETVA…KITRLAHGVP (96 aa).

This sequence belongs to the RecR family.

May play a role in DNA repair. It seems to be involved in an RecBC-independent recombinational process of DNA repair. It may act with RecF and RecO. The chain is Recombination protein RecR from Beijerinckia indica subsp. indica (strain ATCC 9039 / DSM 1715 / NCIMB 8712).